The following is a 427-amino-acid chain: 3-phosphoshikimate 1-carboxyvinyltransferase (427 aa).

3-phosphoshikimate contacts are provided by Lys22, Ser23, and Arg27. Lys22 is a phosphoenolpyruvate binding site. 2 residues coordinate phosphoenolpyruvate: Gly96 and Arg124. Residues Ser169, Ser170, Gln171, Ser197, Asp313, Asn336, and Lys340 each contribute to the 3-phosphoshikimate site. A phosphoenolpyruvate-binding site is contributed by Gln171. Asp313 functions as the Proton acceptor in the catalytic mechanism. The phosphoenolpyruvate site is built by Arg344, Arg386, and Lys411.

The protein belongs to the EPSP synthase family. Monomer.

Its subcellular location is the cytoplasm. The enzyme catalyses 3-phosphoshikimate + phosphoenolpyruvate = 5-O-(1-carboxyvinyl)-3-phosphoshikimate + phosphate. It participates in metabolic intermediate biosynthesis; chorismate biosynthesis; chorismate from D-erythrose 4-phosphate and phosphoenolpyruvate: step 6/7. Catalyzes the transfer of the enolpyruvyl moiety of phosphoenolpyruvate (PEP) to the 5-hydroxyl of shikimate-3-phosphate (S3P) to produce enolpyruvyl shikimate-3-phosphate and inorganic phosphate. The sequence is that of 3-phosphoshikimate 1-carboxyvinyltransferase from Salmonella dublin (strain CT_02021853).